A 169-amino-acid polypeptide reads, in one-letter code: Probable GPI-anchored adhesin-like protein PGA22 (169 aa).

A signal peptide spans 1 to 18; it reads MKYSTLAWLVIASYTVFA. N-linked (GlcNAc...) asparagine glycosylation is found at N87, N104, N111, and N118. G140 carries the GPI-anchor amidated glycine lipid modification. A propeptide spans 141-169 (removed in mature form); it reads PALTTTTVAEAFSLAAGASLGYLVALLFL.

The protein localises to the cell membrane. Functionally, putative adhesin which may be involved in cell adhesion and virulence. The polypeptide is Probable GPI-anchored adhesin-like protein PGA22 (PGA22) (Candida albicans (strain SC5314 / ATCC MYA-2876) (Yeast)).